The following is a 359-amino-acid chain: Glycerol-3-phosphate dehydrogenase [NAD(P)+] (359 aa).

Threonine 11, tryptophan 12, arginine 32, and lysine 107 together coordinate NADPH. Positions 107 and 138 each coordinate sn-glycerol 3-phosphate. Alanine 142 lines the NADPH pocket. Sn-glycerol 3-phosphate is bound by residues lysine 193, aspartate 246, serine 256, arginine 257, and asparagine 258. Residue lysine 193 is the Proton acceptor of the active site. Position 257 (arginine 257) interacts with NADPH. Positions 281 and 283 each coordinate NADPH.

Belongs to the NAD-dependent glycerol-3-phosphate dehydrogenase family.

The protein localises to the cytoplasm. The catalysed reaction is sn-glycerol 3-phosphate + NAD(+) = dihydroxyacetone phosphate + NADH + H(+). It catalyses the reaction sn-glycerol 3-phosphate + NADP(+) = dihydroxyacetone phosphate + NADPH + H(+). It functions in the pathway membrane lipid metabolism; glycerophospholipid metabolism. Its function is as follows. Catalyzes the reduction of the glycolytic intermediate dihydroxyacetone phosphate (DHAP) to sn-glycerol 3-phosphate (G3P), the key precursor for phospholipid synthesis. This Dehalococcoides mccartyi (strain ATCC BAA-2266 / KCTC 15142 / 195) (Dehalococcoides ethenogenes (strain 195)) protein is Glycerol-3-phosphate dehydrogenase [NAD(P)+].